We begin with the raw amino-acid sequence, 1231 residues long: S-layer protein A (1231 aa).

The first 35 residues, 1-35, serve as a signal peptide directing secretion; the sequence is MNKTLGLILTSVFLLSTLGIITGFVIPTQAANSND.

The protein belongs to the Sulfolobales SlaA family. In terms of assembly, the mushroom-shaped unit cells of the Sulfolobales' S-layers may consist of three SlaB subunits and six SlaA subunits.

The protein localises to the secreted. Its subcellular location is the cell wall. It is found in the S-layer. S-layer large protein. May form the highly ordered outer sheath. The sequence is that of S-layer protein A from Saccharolobus solfataricus (strain ATCC 35092 / DSM 1617 / JCM 11322 / P2) (Sulfolobus solfataricus).